The following is a 527-amino-acid chain: Estrogen receptor beta (527 aa).

Residues 1–145 (MDVKNSPSSL…SPSSKRDAHF (145 aa)) form a modulating region. Phosphoserine; by MAPK occurs at positions 84 and 102. NR C4-type zinc fingers lie at residues 146–166 (CAVC…CEGC) and 182–206 (CPAT…LRKC). Residues 146 to 211 (CAVCSDYASG…RLRKCYEVGM (66 aa)) constitute a DNA-binding region (nuclear receptor). Positions 261 to 495 (SPEQLVLTLL…DLLLEMLNAH (235 aa)) constitute an NR LBD domain. The segment at 505–527 (TRSERNLAEDSESKEGSQKPQAQ) is disordered. The segment covering 506-521 (RSERNLAEDSESKEGS) has biased composition (basic and acidic residues).

It belongs to the nuclear hormone receptor family. NR3 subfamily. In terms of assembly, binds DNA as a homodimer. Can form a heterodimer with ESR1. Interacts with NCOA1, NCOA3, NCOA5 and NCOA6 coactivators, leading to a strong increase of transcription of target genes. Interacts with UBE1C and AKAP13. Interacts with DNTTIP2. Interacts with CCDC62 in the presence of estradiol/E2; this interaction seems to enhance the transcription of target genes. Interacts with DNAAF4. Interacts with PRMT2. Interacts with CCAR2 (via N-terminus) in a ligand-independent manner. Interacts with RBM39, in the presence of estradiol (E2). Interacts with STUB1/CHIP. Phosphorylation at Ser-84 and Ser-102 recruits NCOA1.

The protein localises to the nucleus. Nuclear hormone receptor. Binds estrogens with an affinity similar to that of ESR1/ER-alpha, and activates expression of reporter genes containing estrogen response elements (ERE) in an estrogen-dependent manner. The protein is Estrogen receptor beta (ESR2) of Ovis aries (Sheep).